Consider the following 167-residue polypeptide: Translationally-controlled tumor protein homolog (167 aa).

The 167-residue stretch at 1 to 167 (MIIYKDIFSN…WKHGIVEEKI (167 aa)) folds into the TCTP domain. Phosphoserine is present on residues S9 and S15.

The protein belongs to the TCTP family. In terms of assembly, interacts with the 40S and 60S ribosomal subunits. Interacts with microtubules.

It is found in the cytoplasm. The protein resides in the cytoskeleton. The protein localises to the mitochondrion. Its function is as follows. Involved in protein synthesis. Involved in microtubule stabilization. The protein is Translationally-controlled tumor protein homolog (TMA19) of Saccharomyces cerevisiae (strain ATCC 204508 / S288c) (Baker's yeast).